A 517-amino-acid chain; its full sequence is MVKEIDINKLLAQENNALNTILSQVNELCKQNKQLQGLIEIQNETKELEKEHNRSLPWFKRFVKTVSNVKYILIKSEEQLTNEAIKYNNKILKDIDNKIYNIAEKSAPLKQALQEEIEKNFKDLTKKDLSKDQRARLSEVFFSYKSKPERFSALHMTNPLQFINAEALEKQYNSLNATKQNIQNLISANSNIKELKEIQKQVAEIRAEVPHTFFEKLNNIWQNVKNVFVNNSEQVLAKNKESNTRTIRKIDEQLYKTKHKFEELIENKERNIKDIIAKLPDNEKLQKIVSNLTNHMASQKEPILANASLAKPLENNITPPSPLPENNIPSPPPPPPPSPLPENNIPSSPPPPPPPPLPENNIPSPPPPPPPPPPPPMAPAQAETLSKPIESTTVKKLANQPRPSIDTSDLMREIAGPKKLKKVEFDPNTGKPVAHSHSKPAQNVNALSGLESIFARRAVIKVSDSSSSESDSGNWSDVSVNRNKSKMLKTKGERDAKMTTHAQKINNRNSQNPSFVR.

2 disordered regions span residues 313 to 441 (LENN…SKPA) and 461 to 517 (KVSD…SFVR). 2 stretches are compositionally biased toward pro residues: residues 319-340 (PPSP…PSPL) and 347-378 (SSPP…PPMA). In terms of domain architecture, WH2 spans 406 to 423 (DTSDLMREIAGPKKLKKV). The segment at 444–477 (VNALSGLESIFARRAVIKVSDSSSSESDSGNWSD) is central and acidic domains. Positions 463–479 (SDSSSSESDSGNWSDVS) are enriched in low complexity. The segment covering 500 to 517 (THAQKINNRNSQNPSFVR) has biased composition (polar residues).

Homodimer.

Its subcellular location is the cell surface. In terms of biological role, recruits and activates the Arp2/3 complex, which in turn leads to actin polymerization, promoting Rickettsia motility during infection. This chain is Arp2/3 complex-activating protein rickA (rickA), found in Rickettsia conorii (strain ATCC VR-613 / Malish 7).